Here is a 386-residue protein sequence, read N- to C-terminus: MSHIQPTLALTEDLIRRRSVTPEDKGCQDVLIERLTAAGFECETVISGPDHFRVTNLWAVKRGRAGTDGKLLVFAGHTDVVPTGPVEQWHSDPFEPTHRDGKLYARGAADMKTSIAGFVVASEEFVAKHPDHAGSIGFLITSDEEGPAHDGTVKVCDLLRARGERLDYCVVGEPTSVSTLGDMVKNGRRGSLSGKLTVNGVQGHIAYPHLAKNPIHMAAPALAELAAAKWDDGNAYFPPTTWQMSNIHGGTGATNIIPGHVTIDFNFRFSTASTPDGLKARVHSILDAHGLDYTLDWTLGGEPFLTERGELSEALASAIQAECGVTTELSTTGGTSDGRFIAKICPQVIEFGPPNASIHKIDEHVEVAFIEPLKNVYRRVLETLIA.

His77 lines the Zn(2+) pocket. Asp79 is a catalytic residue. Asp110 lines the Zn(2+) pocket. Residue Glu144 is the Proton acceptor of the active site. Positions 145, 173, and 359 each coordinate Zn(2+).

The protein belongs to the peptidase M20A family. DapE subfamily. As to quaternary structure, homodimer. The cofactor is Zn(2+). Requires Co(2+) as cofactor.

The enzyme catalyses N-succinyl-(2S,6S)-2,6-diaminopimelate + H2O = (2S,6S)-2,6-diaminopimelate + succinate. The protein operates within amino-acid biosynthesis; L-lysine biosynthesis via DAP pathway; LL-2,6-diaminopimelate from (S)-tetrahydrodipicolinate (succinylase route): step 3/3. In terms of biological role, catalyzes the hydrolysis of N-succinyl-L,L-diaminopimelic acid (SDAP), forming succinate and LL-2,6-diaminopimelate (DAP), an intermediate involved in the bacterial biosynthesis of lysine and meso-diaminopimelic acid, an essential component of bacterial cell walls. This Ralstonia pickettii (strain 12J) protein is Succinyl-diaminopimelate desuccinylase.